Reading from the N-terminus, the 478-residue chain is Quinoprotein glucose dehydrogenase B (478 aa).

Positions Met1 to Ala24 are cleaved as a signal peptide. D-glucose-binding residues include Gln100 and Asp167. His168 (proton acceptor) is an active-site residue. 2 residues coordinate D-glucose: Gln192 and Arg252. Residues Arg252–Asn253 form a PQQ region. Residues Gly271, Pro272, Glu277, Tyr287, Ala293, Tyr295, Asp297, and Glu333 each coordinate Ca(2+). Residues Tyr367, Thr372, and Lys401 each coordinate pyrroloquinoline quinone. The PQQ stretch occupies residues Arg430–Arg432.

The protein belongs to the PQQ oxidoreductase GdhB family. In terms of assembly, homodimer. Pyrroloquinoline quinone is required as a cofactor. Ca(2+) serves as cofactor.

The catalysed reaction is a ubiquinone + D-glucose = D-glucono-1,5-lactone + a ubiquinol. Oxidizes glucose to gluconolactone. The chain is Quinoprotein glucose dehydrogenase B (gdhB) from Acinetobacter calcoaceticus.